Reading from the N-terminus, the 217-residue chain is Octanoyltransferase (217 aa).

Residues 35 to 214 form the BPL/LPL catalytic domain; sequence DEAGERIWLL…TLPAFLDKLR (180 aa). Residues 73–80, 145–147, and 158–160 contribute to the substrate site; these read RGGRYTYH, AIG, and GFS. Cysteine 176 functions as the Acyl-thioester intermediate in the catalytic mechanism.

The protein belongs to the LipB family.

The protein resides in the cytoplasm. It carries out the reaction octanoyl-[ACP] + L-lysyl-[protein] = N(6)-octanoyl-L-lysyl-[protein] + holo-[ACP] + H(+). It functions in the pathway protein modification; protein lipoylation via endogenous pathway; protein N(6)-(lipoyl)lysine from octanoyl-[acyl-carrier-protein]: step 1/2. Its function is as follows. Catalyzes the transfer of endogenously produced octanoic acid from octanoyl-acyl-carrier-protein onto the lipoyl domains of lipoate-dependent enzymes. Lipoyl-ACP can also act as a substrate although octanoyl-ACP is likely to be the physiological substrate. This is Octanoyltransferase from Sphingopyxis alaskensis (strain DSM 13593 / LMG 18877 / RB2256) (Sphingomonas alaskensis).